The chain runs to 81 residues: Putative membrane protein insertion efficiency factor (81 aa).

The disordered stretch occupies residues 61–81 (NDGGFDPVPPAPSSRTSSIAE).

The protein belongs to the UPF0161 family.

The protein localises to the cell inner membrane. In terms of biological role, could be involved in insertion of integral membrane proteins into the membrane. This chain is Putative membrane protein insertion efficiency factor, found in Pseudomonas putida (strain ATCC 700007 / DSM 6899 / JCM 31910 / BCRC 17059 / LMG 24140 / F1).